The primary structure comprises 112 residues: Mu-ctenitoxin-Pn1a (112 aa).

Positions 1–19 are cleaved as a signal peptide; sequence MKLLGIFLVASFAFVLSFG. Residues 20–33 constitute a propeptide that is removed on maturation; that stretch reads EEMIEGENPLEDQR. 7 disulfides stabilise this stretch: Cys-39–Cys-56, Cys-46–Cys-62, Cys-53–Cys-85, Cys-55–Cys-73, Cys-64–Cys-71, Cys-91–Cys-106, and Cys-102–Cys-110. Gly-111 is modified (glycine amide).

This sequence belongs to the neurotoxin 04 (omega-agtx) family. 02 (Tx1) subfamily. Post-translationally, contains 7 disulfide bonds. In terms of tissue distribution, expressed by the venom gland.

The protein localises to the secreted. Functionally, reversible inhibitor of neuronal sodium channels (Nav1.2/ SCN2A) that binds in proximity to site 1 and displays increasing affinity as the membrane potential is depolarized. Induces excitatory symptoms and spastic paralysis in mice. This Phoneutria nigriventer (Brazilian armed spider) protein is Mu-ctenitoxin-Pn1a.